Here is a 358-residue protein sequence, read N- to C-terminus: Trace amine-associated receptor 7c (358 aa).

Topologically, residues 1 to 47 (MATDDDSFPWDQDSILSRDLLSASSLQLCYENLNRSCVRSPYSPGSR) are extracellular. Asparagine 34 carries an N-linked (GlcNAc...) asparagine glycan. Disulfide bonds link cysteine 37/cysteine 201 and cysteine 120/cysteine 205. Residues 48 to 68 (LILYAVFGFGAVLAVCGNLLV) form a helical membrane-spanning segment. At 69-83 (MTSILHFRQLHSPAN) the chain is on the cytoplasmic side. A helical membrane pass occupies residues 84–104 (FLVASLACADLLVGLTVMPFS). The Extracellular portion of the chain corresponds to 105-125 (MVRSVEGCWYFGNTYCKFHSC). Residues 126-148 (FEGSFCYSSLFHLCFISLDRYIA) traverse the membrane as a helical segment. The Cytoplasmic segment spans residues 149–166 (VSDPLIYPTRFTASISGK). The helical transmembrane segment at 167–187 (CITFSWLLSIIYSFSLLYTGA) threads the bilayer. Residues 188–211 (NEAGLEDLVSALTCVGGCQVAVNQ) lie on the Extracellular side of the membrane. Residues 212–232 (SWVFINFLLFLVPALVMMTVY) traverse the membrane as a helical segment. Residues 233–274 (SKIFLIAKQQAQNIEKMSKQTARASESYKDRVAKRERKAAKT) lie on the Cytoplasmic side of the membrane. The chain crosses the membrane as a helical span at residues 275 to 295 (LGIAVAAFLLSWLPYFIDSII). The Extracellular portion of the chain corresponds to 296-309 (DAFLGFITPTYMYE). The chain crosses the membrane as a helical span at residues 310-332 (ILVWIVYYNSAMNPLIYAFFYPW). The Cytoplasmic portion of the chain corresponds to 333-358 (FRKAIKLIVTGKILRENSSTINLFPE).

The protein belongs to the G-protein coupled receptor 1 family.

It is found in the cell membrane. Its function is as follows. Olfactory receptor specific for N,N-dimethylalkylamines trace amines. Trace amine compounds are enriched in animal body fluids and act on trace amine-associated receptors (TAARs) to elicit both intraspecific and interspecific innate behaviors. Ligand-binding causes a conformation change that triggers signaling via G(s)-class of G alpha proteins (GNAL or GNAS). The chain is Trace amine-associated receptor 7c from Rattus norvegicus (Rat).